We begin with the raw amino-acid sequence, 365 residues long: 1-aminocyclopropane-1-carboxylate oxidase homolog 1 (365 aa).

Positions 212 to 313 (CTNSLLLLGH…RISVACFFSS (102 aa)) constitute a Fe2OG dioxygenase domain. Positions 238, 240, and 294 each coordinate Fe cation.

It belongs to the iron/ascorbate-dependent oxidoreductase family. The cofactor is Fe cation.

This is 1-aminocyclopropane-1-carboxylate oxidase homolog 1 from Arabidopsis thaliana (Mouse-ear cress).